A 2892-amino-acid chain; its full sequence is Inositol 1,4,5-trisphosphate receptor itr-1 (2892 aa).

Residues 1 to 2475 (MNPSYGRVRK…YPLPEHSNSS (2475 aa)) are Cytoplasmic-facing. MIR domains follow at residues 192–246 (GNVI…IEPA), 319–379 (QNSV…VQVV), 386–466 (GGTA…LGPT), and 490–551 (NKEV…LLPV). 357-361 (RMTNR) contacts 1D-myo-inositol 1,4,5-trisphosphate. Residues 625–628 (KLLR) and 689–691 (YRK) each bind 1D-myo-inositol 1,4,5-trisphosphate. The disordered stretch occupies residues 1030–1056 (MMRGGNKENSKDLAKTPSVTAEEAGRT). Over residues 1034–1043 (GNKENSKDLA) the composition is skewed to basic and acidic residues. The chain crosses the membrane as a helical span at residues 2476 to 2496 (ISLGNLYSWFAVFSSFLLAHY). At 2497–2514 (LRHDKIYLHKTSLLILAS) the chain is on the extracellular side. A helical transmembrane segment spans residues 2515–2535 (LCFLLLSSIGVTLTLYIFGIL). Residues 2536 to 2572 (QLVNKIVHVVAFVSNKGLEDRPIAEILACRNLHYLLV) are Cytoplasmic-facing. A helical membrane pass occupies residues 2573–2593 (YLFICILGLLVHPMIYCILLF). Residues 2594-2615 (DIIFTEETLQNVIASVTRNYQS) lie on the Extracellular side of the membrane. A helical membrane pass occupies residues 2616 to 2636 (IVWTGLLALILLYFFSILGFL). Over 2637–2735 (YFRHDFYLEV…FIWRVAYDMT (99 aa)) the chain is Cytoplasmic. Over residues 2655 to 2666 (ATISSGIPSETC) the composition is skewed to polar residues. The interval 2655–2685 (ATISSGIPSETCPSEGCPGLQPSEKDDNDDE) is disordered. The chain crosses the membrane as a helical span at residues 2736–2756 (FFVVLIVIVLNLIFGVIIDTF). Residues 2757–2892 (GDLRAEKNEK…RAFMEQFQPR (136 aa)) are Extracellular-facing.

It belongs to the InsP3 receptor family. In terms of assembly, interacts with myo-1, myo-2, unc-54/myo-4 and nmy-2. Also interacts with iri-1. In terms of tissue distribution, isoform a is expressed in the anterior cells of the pharyngeal terminal bulb, vulva, rectal epithelial cells, spicule protractor muscles of the proctodeum and male-specific neuron CP8 or CP9. Isoform d is expressed in the spermatheca, excretory cell, amphid socket cells, PDA motor neuron, spicule retractor muscles, gubernaculum retractor muscles, posterior oblique muscles, diagonal muscles and the vas deferens. Also expressed in the intestine, pharynx, pharyngeal isthmus, pharyngeal intestinal valve, somatic gonad, hypodermal cells of the vulva, uterine sheath cells, tail, head, LUA motor neuron and the embryonic epidermis (at protein level).

Its subcellular location is the endoplasmic reticulum membrane. Receptor for inositol 1,4,5-trisphosphate, a second messenger that regulates intracellular calcium homeostasis. Binds in vitro to both inositol 1,4,5-trisphosphate (1,4,5-InsP3) and inositol 2,4,5-trisphosphate (2,4,5-InsP3) with high affinity and does not discriminate between the phosphate at 1 or 2 position. Can also bind inositol 1,3,4,5-tetrakisphosphate (1,3,4,5-InsP4) and inositol 4,5-bisphosphate (4,5-InsP2), but with lower affinity. Acts as a timekeeper/rhythm generator via calcium signaling, affecting the defecation cycle and pharyngeal pumping. Affects normal hermaphrodite and male fertility as a participant in intracellular signaling by acting downstream of let-23/lin-3 which regulates ovulation, spermathecal valve dilation and male mating behavior. Important for early embryonic development; controls epidermal cell migration and may also regulate filopodial protrusive activity during epithelial morphogenesis. Component of inositol trisphosphate (IP3)-mediated downstream signaling pathways that controls amphid sensory neuronal (ASH)-mediated response to nose touch and benzaldehyde but not other ASH-mediated responses. Involved in modulating lifespan, acting downstream of transcription factor atf-6. This is Inositol 1,4,5-trisphosphate receptor itr-1 from Caenorhabditis elegans.